Reading from the N-terminus, the 327-residue chain is Peroxidase 21 (327 aa).

A signal peptide spans 1–28 (MANAKPFCLLGFFCLLLQLFSIFHIGNG). 4 cysteine pairs are disulfide-bonded: Cys39–Cys118, Cys72–Cys77, Cys124–Cys323, and Cys204–Cys231. The active-site Proton acceptor is His70. Asp71, Val74, Asp78, and Ser80 together coordinate Ca(2+). Residue Pro167 participates in substrate binding. N-linked (GlcNAc...) asparagine glycosylation occurs at Asn170. A heme b-binding site is contributed by His197. A Ca(2+)-binding site is contributed by Ser198. 3 residues coordinate Ca(2+): Asp247, Thr250, and Asp255.

The protein belongs to the peroxidase family. Classical plant (class III) peroxidase subfamily. Heme b is required as a cofactor. It depends on Ca(2+) as a cofactor. As to expression, preferentially expressed in roots and leaves, slightly in stems.

It carries out the reaction 2 a phenolic donor + H2O2 = 2 a phenolic radical donor + 2 H2O. Its function is as follows. Removal of H(2)O(2), oxidation of toxic reductants, biosynthesis and degradation of lignin, suberization, auxin catabolism, response to environmental stresses such as wounding, pathogen attack and oxidative stress. These functions might be dependent on each isozyme/isoform in each plant tissue. Might function as heat shock-like defense protein. May be implicated in the systemic acquired resistance response. This Arabidopsis thaliana (Mouse-ear cress) protein is Peroxidase 21 (PER21).